Consider the following 523-residue polypeptide: Cytochrome P450 monooxygenase ple5B (523 aa).

Residues 16-33 form a helical membrane-spanning segment; sequence IAAAAAGSAVAVYKLLQL. N-linked (GlcNAc...) asparagine glycosylation is found at asparagine 82, asparagine 103, asparagine 122, asparagine 295, asparagine 379, and asparagine 423. Residue cysteine 446 participates in heme binding.

This sequence belongs to the cytochrome P450 family. The cofactor is heme.

Its subcellular location is the membrane. It functions in the pathway secondary metabolite biosynthesis; terpenoid biosynthesis. In terms of biological role, cytochrome P450 monooxygenase; part of the gene cluster that mediates the biosynthesis of pleuromutilin, a tricyclic diterpene showing antibacterial properties. The geranylgeranyl diphosphate (GGPP) synthase ple4 catalyzes the first step in pleuromutilin biosynthesis. GGPP is then substrate of the premutilin synthase (PS) ple3 to yield premutilin. Premutilin synthase is a bifunctional enzyme composed of the fusion of a class II diterpene cyclase (DTC) and a class I diterpene synthase (DTS), with the corresponding domains and active sites containing characteristic aspartate-rich motifs. GGPP is first converted to mutildienyl-diphosphate (MPP) at the class II DTC site. MPP is subsequently further cyclized at the class I DTS site, followed by a 1,5-hydride shift and addition of water prior to terminating deprotonation, to yield premutilin. The cytochrome P450 monooxygenases ple5 and ple6 hydroxylate premutilin at C-11 and C-3, respectively, producing 11-hydroxypremutilin and 3-hydroxypremutilin. The combination of the actions of both ple5 and ple6 leads to the production of 3,11-dihydroxypremutilin. The short chain dehydrogenase ple7 further converts 3,11-dihydroxypremutilin into mutilin. The acetyltransferase ple2 then acetylates mutilin to produce 14-O-acetylmutilin. Finally, the cytochrome P450 monooxygenase ple1 catalyzes hydroxylation on the alpha position of the acetyl side chain of 14-O-acetylmutilin to yield pleuromutilin. The protein is Cytochrome P450 monooxygenase ple5B of Rhodocybe pseudopiperita (Clitopilus pseudopiperitus).